A 613-amino-acid chain; its full sequence is Zinc metalloproteinase-disintegrin-like EoVMP2 (613 aa).

An N-terminal signal peptide occupies residues 1–20; it reads MMQVLLVTICLAVFPYQGSS. A propeptide spanning residues 21-194 is cleaved from the precursor; sequence IILESGNVND…EASQLFATSE (174 aa). Position 195 is a pyrrolidone carboxylic acid (Gln-195). Residues 201–397 enclose the Peptidase M12B domain; the sequence is RYIEFFIVVD…RNPKCMINKP (197 aa). Glu-204 serves as a coordination point for Ca(2+). Asn-219 carries N-linked (GlcNAc...) asparagine glycosylation. Asp-288 provides a ligand contact to Ca(2+). 3 disulfide bridges follow: Cys-312-Cys-392, Cys-352-Cys-376, and Cys-354-Cys-359. His-337 lines the Zn(2+) pocket. Residue Glu-338 is part of the active site. His-341 and His-347 together coordinate Zn(2+). N-linked (GlcNAc...) asparagine glycosylation is present at Asn-375. 8 residues coordinate Ca(2+): Cys-392, Asn-395, Val-407, Asn-410, Leu-412, Glu-414, Glu-417, and Asp-420. The Disintegrin domain maps to 405–491; it reads PPVCGNGLLE…DCPIDGFHAN (87 aa). Disulfide bonds link Cys-408/Cys-437, Cys-419/Cys-432, Cys-421/Cys-427, Cys-431/Cys-454, Cys-445/Cys-451, Cys-450/Cys-476, Cys-463/Cys-483, Cys-470/Cys-502, Cys-495/Cys-507, Cys-514/Cys-564, Cys-529/Cys-575, Cys-542/Cys-552, Cys-559/Cys-601, and Cys-595/Cys-606. Residues 469 to 471 carry the D/ECD-tripeptide motif; sequence DCD.

Belongs to the venom metalloproteinase (M12B) family. P-III subfamily. P-IIIa sub-subfamily. As to quaternary structure, monomer. The cofactor is Zn(2+). Expressed by the venom gland.

Its subcellular location is the secreted. In terms of biological role, snake venom zinc metalloprotease that possesses high hemorrhagic activity. It inhibits collagen-induced platelet aggregation and activates prothrombin (F2). The sequence is that of Zinc metalloproteinase-disintegrin-like EoVMP2 (Svmp3-Eoc22) from Echis ocellatus (Ocellated saw-scaled viper).